A 59-amino-acid polypeptide reads, in one-letter code: Phycobilisome degradation protein NblA (59 aa).

This sequence to chloroplast ycf18.

Functionally, involved in phycobilisome (PBS) degradation during nutrient deprivation. May mark the PBS for degradation by covalent association with PBS components or may disrupt the PBS via ionic interactions. The chain is Phycobilisome degradation protein NblA from Synechococcus elongatus (strain ATCC 33912 / PCC 7942 / FACHB-805) (Anacystis nidulans R2).